Consider the following 235-residue polypeptide: MNSGYSANIFPSSSSPTLYQSHQLQPNPSATMYQATPRDMGKPPVRGKTSPYGFFVKMCYEEHKKKYPNENVQVTEISKKCSEKWKTMVDDEKRRFYELAQKDAERYQAEVSVAAYGGEDAMRKRKRAKKDPHAPKRALSAFFFYSQDKRPEIQAGHPDWKVGQVAQELGKMWKLVPQETKDMYEQKAQADKDRYADEMRNYKAEMQKMSGMDHYDDDNIHHVVHVEDINSQNIS.

Over residues 1-34 (MNSGYSANIFPSSSSPTLYQSHQLQPNPSATMYQ) the composition is skewed to polar residues. A disordered region spans residues 1–47 (MNSGYSANIFPSSSSPTLYQSHQLQPNPSATMYQATPRDMGKPPVRG). DNA-binding regions (HMG box) lie at residues 47 to 117 (GKTS…AAYG) and 135 to 203 (PKRA…RNYK).

The protein belongs to the HMGB family.

It is found in the nucleus. This is High mobility group protein 1.2 (hmg-1.2) from Caenorhabditis elegans.